Consider the following 353-residue polypeptide: RNA 3'-terminal phosphate cyclase (353 aa).

ATP contacts are provided by residues Gln100 and 285–289 (HAADQ). His311 functions as the Tele-AMP-histidine intermediate in the catalytic mechanism.

It belongs to the RNA 3'-terminal cyclase family. Type 1 subfamily.

The protein resides in the cytoplasm. The enzyme catalyses a 3'-end 3'-phospho-ribonucleotide-RNA + ATP = a 3'-end 2',3'-cyclophospho-ribonucleotide-RNA + AMP + diphosphate. In terms of biological role, catalyzes the conversion of 3'-phosphate to a 2',3'-cyclic phosphodiester at the end of RNA. The mechanism of action of the enzyme occurs in 3 steps: (A) adenylation of the enzyme by ATP; (B) transfer of adenylate to an RNA-N3'P to produce RNA-N3'PP5'A; (C) and attack of the adjacent 2'-hydroxyl on the 3'-phosphorus in the diester linkage to produce the cyclic end product. The biological role of this enzyme is unknown but it is likely to function in some aspects of cellular RNA processing. The chain is RNA 3'-terminal phosphate cyclase from Nitrosospira multiformis (strain ATCC 25196 / NCIMB 11849 / C 71).